The sequence spans 344 residues: Holliday junction branch migration complex subunit RuvB (344 aa).

The segment covering 1–10 (MAIQSSSSGS) has biased composition (low complexity). Positions 1–37 (MAIQSSSSGSKPPAPKRLVAPEATAAEGDGGRDEGLR) are disordered. The tract at residues 13–197 (PAPKRLVAPE…FGLIQRLEFY (185 aa)) is large ATPase domain (RuvB-L). ATP is bound by residues Leu36, Arg37, Gly78, Lys81, Thr82, Thr83, 144–146 (EDF), Arg187, Tyr197, and Arg234. Residue Thr82 participates in Mg(2+) binding. A small ATPAse domain (RuvB-S) region spans residues 198–268 (SCSDLEAIVS…VVVEALAMHR (71 aa)). Positions 271 to 344 (GRGLDPSDRR…DAGRAHLEAA (74 aa)) are head domain (RuvB-H). DNA is bound by residues Arg326 and Arg331.

The protein belongs to the RuvB family. Homohexamer. Forms an RuvA(8)-RuvB(12)-Holliday junction (HJ) complex. HJ DNA is sandwiched between 2 RuvA tetramers; dsDNA enters through RuvA and exits via RuvB. An RuvB hexamer assembles on each DNA strand where it exits the tetramer. Each RuvB hexamer is contacted by two RuvA subunits (via domain III) on 2 adjacent RuvB subunits; this complex drives branch migration. In the full resolvosome a probable DNA-RuvA(4)-RuvB(12)-RuvC(2) complex forms which resolves the HJ.

It is found in the cytoplasm. The catalysed reaction is ATP + H2O = ADP + phosphate + H(+). Functionally, the RuvA-RuvB-RuvC complex processes Holliday junction (HJ) DNA during genetic recombination and DNA repair, while the RuvA-RuvB complex plays an important role in the rescue of blocked DNA replication forks via replication fork reversal (RFR). RuvA specifically binds to HJ cruciform DNA, conferring on it an open structure. The RuvB hexamer acts as an ATP-dependent pump, pulling dsDNA into and through the RuvAB complex. RuvB forms 2 homohexamers on either side of HJ DNA bound by 1 or 2 RuvA tetramers; 4 subunits per hexamer contact DNA at a time. Coordinated motions by a converter formed by DNA-disengaged RuvB subunits stimulates ATP hydrolysis and nucleotide exchange. Immobilization of the converter enables RuvB to convert the ATP-contained energy into a lever motion, pulling 2 nucleotides of DNA out of the RuvA tetramer per ATP hydrolyzed, thus driving DNA branch migration. The RuvB motors rotate together with the DNA substrate, which together with the progressing nucleotide cycle form the mechanistic basis for DNA recombination by continuous HJ branch migration. Branch migration allows RuvC to scan DNA until it finds its consensus sequence, where it cleaves and resolves cruciform DNA. This is Holliday junction branch migration complex subunit RuvB from Synechococcus sp. (strain RCC307).